The following is a 349-amino-acid chain: Protein RecA (349 aa).

65-72 (GPESSGKT) is a binding site for ATP. Residues 329–349 (FDGDVDENENEDDSPKTLFDE) form a disordered region. Residues 331–340 (GDVDENENED) show a composition bias toward acidic residues.

The protein belongs to the RecA family.

Its subcellular location is the cytoplasm. In terms of biological role, can catalyze the hydrolysis of ATP in the presence of single-stranded DNA, the ATP-dependent uptake of single-stranded DNA by duplex DNA, and the ATP-dependent hybridization of homologous single-stranded DNAs. It interacts with LexA causing its activation and leading to its autocatalytic cleavage. The sequence is that of Protein RecA from Staphylococcus epidermidis (strain ATCC 35984 / DSM 28319 / BCRC 17069 / CCUG 31568 / BM 3577 / RP62A).